The sequence spans 155 residues: MDNLEYRSGVGIMLLNKDNLVFAACRNDMKEEAWQMPQGGLEAKETPEVGVLRELEEETGIPPRMVAIISHTKEWLTYDFPADLQASFFKNKYRGQRQLWFLARYLGRDEDININTDKPEFRAWKWVEPKQLPDLIVAFKKPLYEKILSEFSASL.

The region spanning 5-149 (EYRSGVGIML…KKPLYEKILS (145 aa)) is the Nudix hydrolase domain. A Nudix box motif is present at residues 39–60 (GGLEAKETPEVGVLRELEEETG).

The protein belongs to the Nudix hydrolase family. RppH subfamily. Requires a divalent metal cation as cofactor.

Accelerates the degradation of transcripts by removing pyrophosphate from the 5'-end of triphosphorylated RNA, leading to a more labile monophosphorylated state that can stimulate subsequent ribonuclease cleavage. The sequence is that of RNA pyrophosphohydrolase from Zymomonas mobilis subsp. mobilis (strain ATCC 31821 / ZM4 / CP4).